The following is a 245-amino-acid chain: 1-(5-phosphoribosyl)-5-[(5-phosphoribosylamino)methylideneamino] imidazole-4-carboxamide isomerase (245 aa).

Asp8 serves as the catalytic Proton acceptor. The active-site Proton donor is Asp129.

It belongs to the HisA/HisF family.

Its subcellular location is the cytoplasm. It carries out the reaction 1-(5-phospho-beta-D-ribosyl)-5-[(5-phospho-beta-D-ribosylamino)methylideneamino]imidazole-4-carboxamide = 5-[(5-phospho-1-deoxy-D-ribulos-1-ylimino)methylamino]-1-(5-phospho-beta-D-ribosyl)imidazole-4-carboxamide. The protein operates within amino-acid biosynthesis; L-histidine biosynthesis; L-histidine from 5-phospho-alpha-D-ribose 1-diphosphate: step 4/9. The polypeptide is 1-(5-phosphoribosyl)-5-[(5-phosphoribosylamino)methylideneamino] imidazole-4-carboxamide isomerase (Rhodopseudomonas palustris (strain BisB18)).